Consider the following 1050-residue polypeptide: uncharacterized protein (1050 aa).

Coiled-coil stretches lie at residues 1 to 420 (MEKV…TAKM), 463 to 627 (YSLL…IREL), and 692 to 981 (NDSK…NLLS).

This is an uncharacterized protein from Arabidopsis thaliana (Mouse-ear cress).